A 447-amino-acid chain; its full sequence is N-succinylarginine dihydrolase (447 aa).

Substrate is bound by residues 19–28 (GGLAVGNIAS), asparagine 110, and 137–138 (HR). The active site involves glutamate 174. Arginine 213 is a substrate binding site. Histidine 249 is an active-site residue. 2 residues coordinate substrate: aspartate 251 and asparagine 362. Cysteine 368 acts as the Nucleophile in catalysis.

It belongs to the succinylarginine dihydrolase family. In terms of assembly, homodimer.

The enzyme catalyses N(2)-succinyl-L-arginine + 2 H2O + 2 H(+) = N(2)-succinyl-L-ornithine + 2 NH4(+) + CO2. It functions in the pathway amino-acid degradation; L-arginine degradation via AST pathway; L-glutamate and succinate from L-arginine: step 2/5. Functionally, catalyzes the hydrolysis of N(2)-succinylarginine into N(2)-succinylornithine, ammonia and CO(2). The chain is N-succinylarginine dihydrolase from Nitrosospira multiformis (strain ATCC 25196 / NCIMB 11849 / C 71).